The chain runs to 89 residues: Acyl carrier protein MbtL (89 aa).

The region spanning E7–V82 is the Carrier domain. An O-(pantetheine 4'-phosphoryl)serine modification is found at S42.

In terms of processing, 4'-phosphopantetheine is transferred from CoA to a specific serine of apo-ACP, leading to the activated holo-ACP form.

It is found in the cytoplasm. It participates in siderophore biosynthesis; mycobactin biosynthesis. Its function is as follows. Acyl carrier protein involved in the formation of acyl-S-ACP intermediates within the mycobactin biosynthesis process. The chain is Acyl carrier protein MbtL (mbtL) from Mycobacterium sp. (strain MCS).